We begin with the raw amino-acid sequence, 134 residues long: ATP synthase epsilon chain (134 aa).

The protein belongs to the ATPase epsilon chain family. As to quaternary structure, F-type ATPases have 2 components, CF(1) - the catalytic core - and CF(0) - the membrane proton channel. CF(1) has five subunits: alpha(3), beta(3), gamma(1), delta(1), epsilon(1). CF(0) has three main subunits: a, b and c.

The protein localises to the cell inner membrane. In terms of biological role, produces ATP from ADP in the presence of a proton gradient across the membrane. This chain is ATP synthase epsilon chain, found in Nitratidesulfovibrio vulgaris (strain ATCC 29579 / DSM 644 / CCUG 34227 / NCIMB 8303 / VKM B-1760 / Hildenborough) (Desulfovibrio vulgaris).